Here is a 520-residue protein sequence, read N- to C-terminus: MVYFATSAENSKTSYKVDLSHHLSRETRARQPNPIKTIWKIAQTKVGTINMGNGDPHNTLYPISKIDFVVPSLDQPNPVQAWKEGNSKTDIISSYKDESCALSLKTAFAYGTGAGLQQVRGVLADLNNRIHSPPNHTVSLSLGNADSLTKCFRLFGDPGDSFLCEEFTFSPMTNAALPLGIKWEPIKMDKGGLIPADMDKILTNWDERTQGRRPHVLYTVPCSQNPTGSTLPFERRKSIYEIARKWDIIILEDDPYYFLQYGLNVDQFIVEQHGFTRALASVLPRSFLSMDYDGRVVRLDSFSKIVAPGMRLGWVTANNFFAEKLDSLTDSSSQHPHGFGQAFIAELLGDGGWGLDGFMKWTKSLCDEYQRRRDLFMDVFRREVGINGFATAEVPKSGMFVWIKINLEHHARYRVVKESNGDPRTNTAALMDELFRTLLDSGLVLIPASTFAITGSLSPPSGDCILDVSICIDGVGAIAELPLSIFQRVNYFRATFVGTDETICDGLKIFGRTIEQFFCF.

This sequence belongs to the class-I pyridoxal-phosphate-dependent aminotransferase family. The cofactor is pyridoxal 5'-phosphate.

The enzyme catalyses L-tyrosine + 2-oxoglutarate = 3-(4-hydroxyphenyl)pyruvate + L-glutamate. Its pathway is secondary metabolite biosynthesis. Functionally, an L-tyrosine:2-oxoglutarate aminotransferase (probably amt1) and atromentin synthetase nps3 catalyze consecutive steps to turn over L-tyrosine into atromentin, which represents the generic precursor molecule for the entire terphenylquinone and pulvinic acid family of pigments, which are widely distributed secondary metabolites in homobasidiomycetes. The first step catalyzed by amt1 converts L-tyrosine in to 4-hydroxyphenylpyruvate (4-HPP). Adenylation of two 4-HPP monomers by the nps3 adenylation (A) domain, covalent tethering of the monomers as a thioester and oxoester onto the nps3 thiolation (T) and thioesterase (TE) domains, respectively, and symmetric C-C-bond formation between two monomers catalyzed by the nps3 TE domain leads to atromentin. Follow-up products of atromentin in S.lacrymans include atromentic acid, xerocomic acid, isoxerocomic acid and variegatic acid. The chain is L-tyrosine:2-oxoglutarate aminotransferase amt1 (amt1) from Serpula lacrymans var. lacrymans (strain S7.9) (Dry rot fungus).